Here is a 222-residue protein sequence, read N- to C-terminus: MQEQQYQLNSAVAEQREVSGVLRNTYGLLALTLAFSGLVAYVSQQMRLPYPNVFVVLIGFYGLFFLTVKLRNSAWGLVSTFALTGFMGYTLGPILNMYLGLPNGGSVITSAFAMTALVFFGLSAYVLTTRKDMSFLSGFITAGFFVLLGAVLVSLFFQISGLQLAISAGFVLFSSAMILYQTSAIIHGGERNYIMATISLYVSIYNLFISLLQIFGIAGGDD.

A run of 7 helical transmembrane segments spans residues 26–46 (YGLL…SQQM), 48–68 (LPYP…FLTV), 75–95 (WGLV…GPIL), 107–127 (VITS…AYVL), 139–159 (FITA…FFQI), 166–186 (ISAG…SAII), and 198–218 (ISLY…FGIA).

It belongs to the BI1 family.

It is found in the cell membrane. This is an uncharacterized protein from Pseudomonas aeruginosa (strain ATCC 15692 / DSM 22644 / CIP 104116 / JCM 14847 / LMG 12228 / 1C / PRS 101 / PAO1).